Reading from the N-terminus, the 399-residue chain is Immunoglobulin heavy constant gamma 1 (399 aa).

A disordered region spans residues 1-21 (ASTKGPSVFPLAPSSKSTSGG). The CH1 stretch occupies residues 1–98 (ASTKGPSVFP…PSNTKVDKKV (98 aa)). The Extracellular segment spans residues 1–350 (ASTKGPSVFP…DGELDGLWTT (350 aa)). Ig-like domains are found at residues 6–99 (PSVF…KKVE), 121–220 (PSVF…KTIS), and 229–325 (PQVY…KSLS). An intrachain disulfide couples Cys27 to Cys83. The interval 99 to 110 (EPKSCDKTHTCP) is hinge. The interval 111-223 (PCPAPELLGG…PIEKTISKAK (113 aa)) is CH2. 2 disulfides stabilise this stretch: Cys144–Cys204 and Cys250–Cys308. Asn180 carries an N-linked (GlcNAc...) (complex) asparagine glycan. Residues 224–330 (GQPREPQVYT…QKSLSLSPEL (107 aa)) form a CH3 region. A helical membrane pass occupies residues 351-371 (ITIFITLFLLSVCYSATVTFF). Over 372 to 399 (KVKWIFSSVVDLKQTIIPDYRNMIGQGA) the chain is Cytoplasmic.

Immunoglobulins are composed of two identical heavy chains and two identical light chains; disulfide-linked. Interacts with FCGR1A; this interaction mediates IgG effector functions on monocytes. Interacts with FCGR2A and FCGR3A. Post-translationally, glycosylation on Asn-180 is required for interaction with Fc receptors and ability to activate the complement pathway. (Microbial infection) Deglycosylation on Asn-180 by S.pyogenes EndoS or Endos2 endoglucosidases prevents interaction between immunoglobulin-gamma (IgG) and Fc receptors, impairing ability to activate the complement pathway.

It localises to the secreted. Its subcellular location is the cell membrane. Its function is as follows. Constant region of immunoglobulin heavy chains. Immunoglobulins, also known as antibodies, are membrane-bound or secreted glycoproteins produced by B lymphocytes. In the recognition phase of humoral immunity, the membrane-bound immunoglobulins serve as receptors which, upon binding of a specific antigen, trigger the clonal expansion and differentiation of B lymphocytes into immunoglobulins-secreting plasma cells. Secreted immunoglobulins mediate the effector phase of humoral immunity, which results in the elimination of bound antigens. The antigen binding site is formed by the variable domain of one heavy chain, together with that of its associated light chain. Thus, each immunoglobulin has two antigen binding sites with remarkable affinity for a particular antigen. The variable domains are assembled by a process called V-(D)-J rearrangement and can then be subjected to somatic hypermutations which, after exposure to antigen and selection, allow affinity maturation for a particular antigen. Mediates IgG effector functions on monocytes triggering ADCC of virus-infected cells. In Homo sapiens (Human), this protein is Immunoglobulin heavy constant gamma 1.